The chain runs to 225 residues: MAEAKPALEKEAAVKTGSIPSESEDETASHKEGSTSLVSIDEYLAAGVHIGTQQKTQDMMRFVYRVRTDGLYVLDIQSTDERIRVASKLLSHYDPARILVVSSRQYGQHPARMFSRALGTRAMLGRFIPGSLTNPQIHGFFEPDVIIVTDPAGDAQVLKEASSIGVPVVALCDTNNLTSNVDLVIPTNNKGRKALSLVYWLLAREVSRLNDTPFNYELTDFETPL.

Over residues 1 to 13 (MAEAKPALEKEAA) the composition is skewed to basic and acidic residues. The disordered stretch occupies residues 1–33 (MAEAKPALEKEAAVKTGSIPSESEDETASHKEG).

Belongs to the universal ribosomal protein uS2 family.

The chain is Small ribosomal subunit protein uS2 from Methanosarcina acetivorans (strain ATCC 35395 / DSM 2834 / JCM 12185 / C2A).